The chain runs to 1390 residues: General transcriptional corepressor trfA (1390 aa).

The interval 53 to 143 is disordered; it reads QQQQQHQQHQ…QQQQQQQQQQ (91 aa). TPR repeat units lie at residues 171 to 204, 206 to 238, 239 to 272, 275 to 308, 312 to 345, 349 to 382, 384 to 419, 420 to 453, 454 to 487, and 489 to 521; these read ESIW…NPFS, KALT…ESKN, GEVW…LPNP, PNLW…DNKF, TEIY…PPLP, SDIW…NATH, KVLQ…DSSD, AQTW…DGRN, PTFW…NPFL, and EVWY…DPHN. Disordered stretches follow at residues 539-596, 632-938, and 958-1390; these read PIGK…NSFV, ERGR…YNNI, and LDEE…KLER. The span at 540 to 557 shows a compositional bias: basic and acidic residues; that stretch reads IGKDGYDLQNGEHGEHGG. The span at 582 to 593 shows a compositional bias: low complexity; it reads QNNRNGNNNGNN. The segment covering 632-641 has biased composition (basic and acidic residues); sequence ERGRGEDMHN. Residues 644–744 are compositionally biased toward low complexity; the sequence is HSQYSNSMSM…MNDNVNSKNN (101 aa). A compositionally biased stretch (basic and acidic residues) spans 745 to 803; that stretch reads DVLDRRYKGILEREKTSPNGDGRDNRDNIRDNRDNRDSRDGRDNRDGRDSRDRIQEYTR. Residues 805-846 are compositionally biased toward low complexity; sequence YNNNNNNNNSISSINNNNNNNNNNYNNNNNNNNNNNNNNNNN. Residues 857–871 show a composition bias toward basic and acidic residues; that stretch reads HNDRRSYERDNKERI. 2 stretches are compositionally biased toward low complexity: residues 872–898 and 917–937; these read NNNN…NNNN and NNSN…NYNN. Basic and acidic residues-rich tracts occupy residues 977 to 993, 1000 to 1029, 1037 to 1099, and 1120 to 1135; these read KEAE…KERS, EKPD…EKES, KEIE…EKES, and TKKD…EKKL. Polar residues predominate over residues 1136 to 1146; sequence SSVSPTTTAVE. Positions 1147 to 1169 are enriched in basic and acidic residues; it reads QSRDETKELEMDTKEDSEKEKKS. Composition is skewed to low complexity over residues 1170–1180 and 1192–1203; these read STTTTAAASES and TTTTTTTTNTTT. Over residues 1206–1218 the composition is skewed to basic and acidic residues; it reads PTHKDKESSKNDD. Positions 1219–1228 are enriched in low complexity; the sequence is TTTTTTTTTT. Residues 1229–1239 are compositionally biased toward polar residues; that stretch reads KSAKSPNSSPT. Over residues 1240-1263 the composition is skewed to basic and acidic residues; the sequence is RSDEVVEPHQDASQEEINKRKLED. 2 stretches are compositionally biased toward low complexity: residues 1277–1289 and 1315–1337; these read STPS…STPS and SSSS…TNSS. Basic and acidic residues predominate over residues 1339 to 1374; sequence KNERDRDRERERERERDREREREREREREREREKNK.

It belongs to the CYC8/SSN6 family. In terms of assembly, associates with tupA to form the trfA-tupA corepressor complex.

The protein localises to the nucleus. In terms of biological role, acts as a component of the trfA-tupA corepressor complex which is involved in the repression of many genes in a wide variety of physiological processes. May also be involved in the derepression of at least some target genes. The complex is recruited to target genes by interaction with DNA-bound transcriptional repressors. The complex recruits histone deacetylases to produce a repressive chromatin structure, interacts with hypoacetylated N-terminal tails of histones H3 and H4 that have been programmed for repression by the action of histone deacetylases and interferes directly with the transcriptional machinery by associating with the RNA polymerase II mediator complex. Required for normal growth and for aggregation in early development. Required for a proper chemotactic response to cAMP. The sequence is that of General transcriptional corepressor trfA (trfA) from Dictyostelium discoideum (Social amoeba).